The primary structure comprises 214 residues: Non-structural protein NP-1 (214 aa).

2 disordered regions span residues 1–85 (MSSE…TRTN) and 192–214 (ESEE…NASN). A compositionally biased stretch (basic residues) spans 33-43 (SRSRSPIRRHG). A compositionally biased stretch (basic and acidic residues) spans 44–55 (EKNLEYAHHNNQ). Positions 56–71 (DNRQSSYTASKTSDQA) are enriched in polar residues. Residues 192-201 (ESEEVTDEEM) show a composition bias toward acidic residues.

Belongs to the Bocaparvovirus Non-structural protein NP-1 family.

The protein localises to the host nucleus. Its function is as follows. Required for the expression of the capsid proteins. Performs the splicing and internal polyadenylation of the viral capsid-encoding mRNA precursor, which allows its maturation and expression. Transactivates the viral promoter. In Human bocavirus 4 (HBoV4), this protein is Non-structural protein NP-1 (NP1).